Consider the following 443-residue polypeptide: Serine/threonine-protein kinase 40 (443 aa).

A compositionally biased stretch (basic and acidic residues) spans 1 to 11 (MKRRASERDAG). A disordered region spans residues 1–26 (MKRRASERDAGETSARSKALCSSISG). Over residues 14–26 (SARSKALCSSISG) the composition is skewed to polar residues. A Protein kinase domain is found at 35–332 (FILGPRLGNS…EVLESLGAII (298 aa)). ATP is bound by residues 41–49 (LGNSPVPSI) and Lys-66. Asp-197 (proton acceptor) is an active-site residue.

It belongs to the protein kinase superfamily. CAMK Ser/Thr protein kinase family.

The protein localises to the nucleus. Its subcellular location is the cytoplasm. The catalysed reaction is L-seryl-[protein] + ATP = O-phospho-L-seryl-[protein] + ADP + H(+). The enzyme catalyses L-threonyl-[protein] + ATP = O-phospho-L-threonyl-[protein] + ADP + H(+). Its function is as follows. May be a negative regulator of NF-kappa-B and p53-mediated gene transcription. This is Serine/threonine-protein kinase 40 (stk40) from Xenopus tropicalis (Western clawed frog).